Here is a 268-residue protein sequence, read N- to C-terminus: Adenosylcobinamide-GDP ribazoletransferase (268 aa).

8 consecutive transmembrane segments (helical) span residues 1–21 (MAGN…TLPV), 36–56 (YLFI…GTLF), 59–79 (ILPA…LTGI), 112–132 (AGGL…AMTF), 138–158 (WLFV…ITII), 182–202 (LAAV…AAII), 212–232 (IMAG…ILII), and 244–264 (VIGA…GAVL).

This sequence belongs to the CobS family. Mg(2+) serves as cofactor.

The protein localises to the cell membrane. The catalysed reaction is alpha-ribazole + adenosylcob(III)inamide-GDP = adenosylcob(III)alamin + GMP + H(+). It carries out the reaction alpha-ribazole 5'-phosphate + adenosylcob(III)inamide-GDP = adenosylcob(III)alamin 5'-phosphate + GMP + H(+). It functions in the pathway cofactor biosynthesis; adenosylcobalamin biosynthesis; adenosylcobalamin from cob(II)yrinate a,c-diamide: step 7/7. Its function is as follows. Joins adenosylcobinamide-GDP and alpha-ribazole to generate adenosylcobalamin (Ado-cobalamin). Also synthesizes adenosylcobalamin 5'-phosphate from adenosylcobinamide-GDP and alpha-ribazole 5'-phosphate. This Methanocella arvoryzae (strain DSM 22066 / NBRC 105507 / MRE50) protein is Adenosylcobinamide-GDP ribazoletransferase.